The sequence spans 283 residues: Short-chain dehydrogenase anuB (283 aa).

Residues T57, D78, N106, Y166, K170, V199, and T201 each coordinate NADP(+). Y166 functions as the Proton acceptor in the catalytic mechanism. The active-site Proton donor is Y166. The active-site Lowers pKa of active site Tyr is the K170.

The protein belongs to the short-chain dehydrogenases/reductases (SDR) family.

The protein operates within secondary metabolite biosynthesis. Its function is as follows. Highly reducing polyketide synthase; part of the gene cluster that mediates the biosynthesis of annullatin D, an alkylated aromatic polyketide with a fused dihydrobenzofuran lactone ring system that exhibits potent agonistic activities toward the cannabinoid receptors. The annullatin backbone 2-hydroxymethyl-3-pentylphenol is assembled from one acetyl-CoA starter unit and 5 malonyl-CoA elongation units by cooperation of the highly reducing polyketide synthase anuA, the short-chain dehydrogenase anuB and the oxidoreductase anuC, before being hydroxylated at the C-5 alkyl chain by the cytochrome P450 monooxygenase anuE to form (8S)-annullatin E. The prenyltransferase anuH subsequently installs one isoprenyl group at the benzene ring to form (8S)-annullatin J. Enzymatic or nonenzymatic dihydro-benzofuran ring formation between the prenyl and the phenolic hydroxyl groups in (8S)-annullatin J results in two diastereomers (2S,9S)-annullatin H and compound 12. The intermediate (2S,9S)-annullatin H is then converted to (2S,9S)-annullatin D by the FAD-linked oxidoreductase anuG-catalyzed five-member lactone ring formation. The isomer 12 acts as a substrate for the short-chain dehydrogenase anuF and is oxidized to (2R)-annullatin F, which is subsequently acetylated by an acetyltransferase leading to (2R)-annullatin G formation. The remaining enzymes identified within the cluster, anuD, anuI and anuJ, seem not to be involved in annullatin biosynthesis. The polypeptide is Short-chain dehydrogenase anuB (Penicillium roqueforti (strain FM164)).